Here is a 610-residue protein sequence, read N- to C-terminus: UvrABC system protein C (610 aa).

The 79-residue stretch at 16 to 94 folds into the GIY-YIG domain; that stretch reads SQPGVYRMYD…IKLYQPRYNV (79 aa). Positions 204 to 239 constitute a UVR domain; it reads DQVLTQLIARMEKASQDLAFEEAARIRDQIQAVRRV.

It belongs to the UvrC family. In terms of assembly, interacts with UvrB in an incision complex.

The protein resides in the cytoplasm. Functionally, the UvrABC repair system catalyzes the recognition and processing of DNA lesions. UvrC both incises the 5' and 3' sides of the lesion. The N-terminal half is responsible for the 3' incision and the C-terminal half is responsible for the 5' incision. The protein is UvrABC system protein C of Salmonella dublin (strain CT_02021853).